Reading from the N-terminus, the 194-residue chain is Protein GrpE (194 aa).

The tract at residues methionine 1–glutamate 53 is disordered. Acidic residues predominate over residues glutamate 10–glutamate 44.

The protein belongs to the GrpE family. In terms of assembly, homodimer.

It is found in the cytoplasm. In terms of biological role, participates actively in the response to hyperosmotic and heat shock by preventing the aggregation of stress-denatured proteins, in association with DnaK and GrpE. It is the nucleotide exchange factor for DnaK and may function as a thermosensor. Unfolded proteins bind initially to DnaJ; upon interaction with the DnaJ-bound protein, DnaK hydrolyzes its bound ATP, resulting in the formation of a stable complex. GrpE releases ADP from DnaK; ATP binding to DnaK triggers the release of the substrate protein, thus completing the reaction cycle. Several rounds of ATP-dependent interactions between DnaJ, DnaK and GrpE are required for fully efficient folding. The chain is Protein GrpE from Halalkalibacterium halodurans (strain ATCC BAA-125 / DSM 18197 / FERM 7344 / JCM 9153 / C-125) (Bacillus halodurans).